The following is a 476-amino-acid chain: MSSFYNEAKFLISDGEQMRIDTYAVGRKTMQQSDAFKGTFYENFTLVYALPLSNHDNSSLMLIAGFYALLFMFGTCGNAAILAVVHHVKGQDPRSRHNTTLTYICILSIVDFLSMLPIPMTIIDQILGFWMFDTFACKLFRLLEHIGKIFSTFILVAFSIDRYCAVCHPLQVRVRNQRTVFVFLGIMFFVTCVMLSPILLYAHSKELVMHEKVDLDQEVITRMHLYKCVDDLGRELFVVFTLYSFVLAYLMPLLFMIYFYYEMLIRLFKQANVIKQTLVGRRSGGEEKKLTIPVGHIAIYTLAICSFHFICWTPYWISILYSLYEELYQDTKSTASPPTYAFIYFMYGVHALPYINSASNFILYGLLNRQLHNAPERKYTRNGVGGRQMSHALTTNTRPEYSELIAIPSSSCRPDSRVSAMIHNNNNNTESLPLAQNISNMTNKDSATIVPMPMSANVDGNEIYNWITPDTESVIL.

Residues 1-61 are Extracellular-facing; it reads MSSFYNEAKF…LSNHDNSSLM (61 aa). N43 and N57 each carry an N-linked (GlcNAc...) asparagine glycan. The helical transmembrane segment at 62–82 threads the bilayer; it reads LIAGFYALLFMFGTCGNAAIL. At 83 to 102 the chain is on the cytoplasmic side; sequence AVVHHVKGQDPRSRHNTTLT. The chain crosses the membrane as a helical span at residues 103 to 123; the sequence is YICILSIVDFLSMLPIPMTII. At 124-139 the chain is on the extracellular side; it reads DQILGFWMFDTFACKL. An intrachain disulfide couples C137 to C228. Residues 140 to 160 form a helical membrane-spanning segment; sequence FRLLEHIGKIFSTFILVAFSI. Over 161–179 the chain is Cytoplasmic; it reads DRYCAVCHPLQVRVRNQRT. The helical transmembrane segment at 180–200 threads the bilayer; the sequence is VFVFLGIMFFVTCVMLSPILL. Residues 201-236 are Extracellular-facing; that stretch reads YAHSKELVMHEKVDLDQEVITRMHLYKCVDDLGREL. Residues 237 to 257 traverse the membrane as a helical segment; the sequence is FVVFTLYSFVLAYLMPLLFMI. At 258-291 the chain is on the cytoplasmic side; the sequence is YFYYEMLIRLFKQANVIKQTLVGRRSGGEEKKLT. A helical transmembrane segment spans residues 292 to 312; that stretch reads IPVGHIAIYTLAICSFHFICW. Over 313 to 334 the chain is Extracellular; it reads TPYWISILYSLYEELYQDTKST. A helical membrane pass occupies residues 335–355; the sequence is ASPPTYAFIYFMYGVHALPYI. The Cytoplasmic segment spans residues 356–476; sequence NSASNFILYG…ITPDTESVIL (121 aa).

The protein belongs to the G-protein coupled receptor 1 family. In terms of tissue distribution, expressed in sensory neurons including ASER.

Its subcellular location is the cell membrane. Probable receptor for neuropeptide ligand nlp-9 that plays a role in octopamine signaling and specifically, the octapamine inhibition of aversion responses in olfactory sensory neurons. In AWB olfactory sensory neurons, required for the detection of preferred food sources. This Caenorhabditis elegans protein is Neuropeptide receptor 18.